An 872-amino-acid polypeptide reads, in one-letter code: Adhesive plaque matrix protein (872 aa).

Positions M1–A20 are cleaved as a signal peptide. Residues L21–A41 form a nonrepetitive linker region. A run of 69 repeats spans residues Y124–S133, Y134–T143, Y144–T153, Y154–S163, Y174–T183, Y184–P192, Y193–T202, Y203–T212, Y213–P221, Y222–T231, Y232–I241, Y242–S251, Y252–T261, Y262–T271, Y272–T281, Y282–T291, Y292–T301, Y302–T311, Y312–P321, Y322–I331, Y332–S341, Y342–T351, Y352–T361, Y362–S371, Y372–T381, Y382–T391, Y402–T411, Y412–T421, Y422–S431, Y432–T441, Y442–T451, Y452–T461, Y462–T471, Y472–T481, Y482–T491, Y502–I511, Y512–S521, Y522–T531, Y532–T541, Y542–S551, Y552–T561, Y562–T571, Y572–T581, Y582–T591, Y602–I611, Y612–A621, Y622–T631, Y632–T641, Y642–S651, Y652–T661, Y662–A671, Y672–S681, Y682–S691, Y702–T711, Y712–S721, Y722–T731, Y732–T741, Y742–T751, Y752–S761, Y762–T771, Y772–S781, Y782–T791, Y792–S801, Y812–S821, Y822–T831, Y832–T841, Y842–T851, Y852–A861, and Y862–Q871. A 69 X 10 AA tandem repeats of Y-[KRQ]-[PSTAHQR]-K-[AIPTSKGV]-[STR]-Y-[PTSVA]-[PSTQA]-[STYIPAQ] region spans residues Y124–Q871. The tract at residues Y184–P192 is nonapeptide 1. A nonapeptide 2 region spans residues Y213–P221. 2 stretches are compositionally biased toward pro residues: residues K273–Y282 and T291–Y302. Residues K273–S781 are disordered. Residues T320–P360 are compositionally biased toward low complexity. The span at T361 to Y372 shows a compositional bias: pro residues. Positions T377–P390 are enriched in low complexity. Pro residues predominate over residues T391–Y402. A compositionally biased stretch (low complexity) spans K403–P450. 2 stretches are compositionally biased toward pro residues: residues T451–Y462 and T471–Y482. Positions P501–P540 are enriched in low complexity. The segment covering T541–Y552 has biased composition (pro residues). 2 stretches are compositionally biased toward low complexity: residues Y568–P590 and T600–P640. Residues T641–Y652 show a composition bias toward pro residues. Composition is skewed to low complexity over residues S677–P690 and Y698–P719. The span at P754–K763 shows a compositional bias: low complexity.

Hydroxylated on proline (mono- or dihydroxylation) and tyrosine residues (to L-DOPA = 3',4'-dihydroxyphenylalanine) of the tandem repeats. In terms of tissue distribution, produced by the byssal gland.

It localises to the secreted. Functionally, provides adhesiveness to the mussel's foot. Mussels produce one of the strongest water insoluble glues. The mussel's adhesive is a bundle of threads, called a byssus, formed by a fibrous collagenous core coated with adhesive proteins. This Mytilus coruscus (Sea mussel) protein is Adhesive plaque matrix protein (FP1).